The primary structure comprises 648 residues: Calpain-5 (648 aa).

A Calpain catalytic domain is found at 28–353; it reads PFVDTLFPPT…FTDISLCQLF (326 aa). Active-site residues include C83, H252, and N290. The tract at residues 354–509 is domain III; sequence NTSVFSFSRS…VYSDEHIHFS (156 aa). Residues 502-625 form the C2 domain; that stretch reads SDEHIHFSPL…ENRDTTLQLT (124 aa).

It belongs to the peptidase C2 family. Ca(2+) is required as a cofactor. Expressed in neuronal, but not in GABA-ergic neurons, intestinal, hypodermal and excretory tissues.

Functionally, required for the correct female sexual development of the soma and germline in hermaphrodite animals, while being fully dispensable in males. Has calcium-dependent proteolytic activity and is involved in the cleavage of tra-2, for which it acts as a potentiator. Capable of calcium-dependent autolysis. Part of the necrosis cell death pathway. Required for necrosis of intestinal cells induced by B.thuringiensis endotoxin Cry6Aa. The chain is Calpain-5 from Caenorhabditis elegans.